The sequence spans 381 residues: Alkanesulfonate monooxygenase (381 aa).

This sequence belongs to the SsuD family. As to quaternary structure, homotetramer.

It carries out the reaction an alkanesulfonate + FMNH2 + O2 = an aldehyde + FMN + sulfite + H2O + 2 H(+). Its function is as follows. Catalyzes the desulfonation of aliphatic sulfonates. This is Alkanesulfonate monooxygenase from Escherichia coli O1:K1 / APEC.